Here is a 287-residue protein sequence, read N- to C-terminus: ATP phosphoribosyltransferase (287 aa).

The protein belongs to the ATP phosphoribosyltransferase family. Long subfamily. In terms of assembly, equilibrium between an active dimeric form, an inactive hexameric form and higher aggregates. Interconversion between the various forms is largely reversible and is influenced by the natural substrates and inhibitors of the enzyme. The cofactor is Mg(2+).

Its subcellular location is the cytoplasm. It catalyses the reaction 1-(5-phospho-beta-D-ribosyl)-ATP + diphosphate = 5-phospho-alpha-D-ribose 1-diphosphate + ATP. It functions in the pathway amino-acid biosynthesis; L-histidine biosynthesis; L-histidine from 5-phospho-alpha-D-ribose 1-diphosphate: step 1/9. Feedback inhibited by histidine. Catalyzes the condensation of ATP and 5-phosphoribose 1-diphosphate to form N'-(5'-phosphoribosyl)-ATP (PR-ATP). Has a crucial role in the pathway because the rate of histidine biosynthesis seems to be controlled primarily by regulation of HisG enzymatic activity. The protein is ATP phosphoribosyltransferase (hisG) of Mycobacterium leprae (strain TN).